A 163-amino-acid chain; its full sequence is COP9 signalosome complex subunit 9 (163 aa).

The PCI domain maps to 5–120 (EVLHAVLDPK…SVGRRIKVLR (116 aa)).

In terms of assembly, component of a COP9 signalosome-like (CSN) complex.

It is found in the cytoplasm. The protein localises to the nucleus. Its function is as follows. Component of the COP9 signalosome (CSN) complex that acts as a regulator of the ubiquitin (Ubl) conjugation pathway by mediating the deneddylation of the cullin subunit of SCF-type E3 ubiquitin-protein ligase complexes. The complex is involved in the regulation of the mating pheromone response. The chain is COP9 signalosome complex subunit 9 (CSN9) from Eremothecium gossypii (strain ATCC 10895 / CBS 109.51 / FGSC 9923 / NRRL Y-1056) (Yeast).